A 384-amino-acid chain; its full sequence is S-adenosylmethionine synthase (384 aa).

His15 is an ATP binding site. Residue Asp17 coordinates Mg(2+). Residue Glu43 coordinates K(+). Glu56 and Gln99 together coordinate L-methionine. Residues 99–109 (QSADINQGVDR) form a flexible loop region. Residues 164 to 166 (DAK), 230 to 231 (RF), Asp239, 245 to 246 (RK), Ala262, and Lys266 each bind ATP. Residue Asp239 coordinates L-methionine. Lys270 lines the L-methionine pocket.

Belongs to the AdoMet synthase family. As to quaternary structure, homotetramer; dimer of dimers. Mg(2+) serves as cofactor. Requires K(+) as cofactor.

The protein resides in the cytoplasm. It catalyses the reaction L-methionine + ATP + H2O = S-adenosyl-L-methionine + phosphate + diphosphate. It functions in the pathway amino-acid biosynthesis; S-adenosyl-L-methionine biosynthesis; S-adenosyl-L-methionine from L-methionine: step 1/1. Functionally, catalyzes the formation of S-adenosylmethionine (AdoMet) from methionine and ATP. The overall synthetic reaction is composed of two sequential steps, AdoMet formation and the subsequent tripolyphosphate hydrolysis which occurs prior to release of AdoMet from the enzyme. This is S-adenosylmethionine synthase from Haemophilus influenzae (strain ATCC 51907 / DSM 11121 / KW20 / Rd).